Consider the following 479-residue polypeptide: Adenosylhomocysteinase (479 aa).

Thr66, Asp142, and Glu203 together coordinate substrate. Position 204 to 206 (Thr204 to Thr206) interacts with NAD(+). Positions 233 and 237 each coordinate substrate. NAD(+)-binding positions include Asn238, Gly267–Gly272, Glu290, Asn325, Ile346–His348, and Asn394.

This sequence belongs to the adenosylhomocysteinase family. The cofactor is NAD(+).

It localises to the cytoplasm. It carries out the reaction S-adenosyl-L-homocysteine + H2O = L-homocysteine + adenosine. The protein operates within amino-acid biosynthesis; L-homocysteine biosynthesis; L-homocysteine from S-adenosyl-L-homocysteine: step 1/1. Functionally, may play a key role in the regulation of the intracellular concentration of adenosylhomocysteine. This chain is Adenosylhomocysteinase, found in Oleidesulfovibrio alaskensis (strain ATCC BAA-1058 / DSM 17464 / G20) (Desulfovibrio alaskensis).